The chain runs to 171 residues: NADH-quinone oxidoreductase subunit B 2 (171 aa).

Residues Cys37, Cys38, Cys102, and Cys132 each coordinate [4Fe-4S] cluster.

This sequence belongs to the complex I 20 kDa subunit family. In terms of assembly, NDH-1 is composed of 14 different subunits. Subunits NuoB, C, D, E, F, and G constitute the peripheral sector of the complex. [4Fe-4S] cluster is required as a cofactor.

The protein localises to the cell inner membrane. The catalysed reaction is a quinone + NADH + 5 H(+)(in) = a quinol + NAD(+) + 4 H(+)(out). NDH-1 shuttles electrons from NADH, via FMN and iron-sulfur (Fe-S) centers, to quinones in the respiratory chain. Couples the redox reaction to proton translocation (for every two electrons transferred, four hydrogen ions are translocated across the cytoplasmic membrane), and thus conserves the redox energy in a proton gradient. The protein is NADH-quinone oxidoreductase subunit B 2 of Chromobacterium violaceum (strain ATCC 12472 / DSM 30191 / JCM 1249 / CCUG 213 / NBRC 12614 / NCIMB 9131 / NCTC 9757 / MK).